The sequence spans 382 residues: Mannitol-1-phosphate 5-dehydrogenase (382 aa).

3–14 is an NAD(+) binding site; that stretch reads ALHFGAGNIGRG.

This sequence belongs to the mannitol dehydrogenase family.

The enzyme catalyses D-mannitol 1-phosphate + NAD(+) = beta-D-fructose 6-phosphate + NADH + H(+). In Pectobacterium atrosepticum (strain SCRI 1043 / ATCC BAA-672) (Erwinia carotovora subsp. atroseptica), this protein is Mannitol-1-phosphate 5-dehydrogenase.